We begin with the raw amino-acid sequence, 485 residues long: N-succinylglutamate 5-semialdehyde dehydrogenase (485 aa).

NAD(+) is bound at residue Gly220–Gly225. Active-site residues include Glu243 and Cys278.

This sequence belongs to the aldehyde dehydrogenase family. AstD subfamily.

It carries out the reaction N-succinyl-L-glutamate 5-semialdehyde + NAD(+) + H2O = N-succinyl-L-glutamate + NADH + 2 H(+). Its pathway is amino-acid degradation; L-arginine degradation via AST pathway; L-glutamate and succinate from L-arginine: step 4/5. In terms of biological role, catalyzes the NAD-dependent reduction of succinylglutamate semialdehyde into succinylglutamate. The chain is N-succinylglutamate 5-semialdehyde dehydrogenase from Vibrio vulnificus (strain YJ016).